The primary structure comprises 1368 residues: DNA-directed RNA polymerase subunit beta (1368 aa).

Belongs to the RNA polymerase beta chain family. In terms of assembly, the RNAP catalytic core consists of 2 alpha, 1 beta, 1 beta' and 1 omega subunit. When a sigma factor is associated with the core the holoenzyme is formed, which can initiate transcription.

It carries out the reaction RNA(n) + a ribonucleoside 5'-triphosphate = RNA(n+1) + diphosphate. Functionally, DNA-dependent RNA polymerase catalyzes the transcription of DNA into RNA using the four ribonucleoside triphosphates as substrates. The sequence is that of DNA-directed RNA polymerase subunit beta from Burkholderia thailandensis (strain ATCC 700388 / DSM 13276 / CCUG 48851 / CIP 106301 / E264).